The sequence spans 253 residues: Triosephosphate isomerase (253 aa).

9–11 (NWK) contributes to the substrate binding site. His-95 acts as the Electrophile in catalysis. Glu-167 (proton acceptor) is an active-site residue. Residues Gly-173, Ser-213, and 234–235 (GG) contribute to the substrate site. Residue Ser-213 is modified to Phosphoserine.

The protein belongs to the triosephosphate isomerase family. As to quaternary structure, homodimer.

It is found in the cytoplasm. The catalysed reaction is D-glyceraldehyde 3-phosphate = dihydroxyacetone phosphate. Its pathway is carbohydrate biosynthesis; gluconeogenesis. It participates in carbohydrate degradation; glycolysis; D-glyceraldehyde 3-phosphate from glycerone phosphate: step 1/1. In terms of biological role, involved in the gluconeogenesis. Catalyzes stereospecifically the conversion of dihydroxyacetone phosphate (DHAP) to D-glyceraldehyde-3-phosphate (G3P). The chain is Triosephosphate isomerase from Bacillus velezensis (strain DSM 23117 / BGSC 10A6 / LMG 26770 / FZB42) (Bacillus amyloliquefaciens subsp. plantarum).